Reading from the N-terminus, the 674-residue chain is Zyxin (674 aa).

The segment at 35–447 (PPKPKVNPFR…PHQDQTSGSQ (413 aa)) is disordered. The segment covering 86–109 (LPPPPPNEEPMSPPGSSFPPPPPS) has biased composition (pro residues). Low complexity predominate over residues 110-120 (FGDDGPGSPLG). Pro residues-rich tracts occupy residues 121-148 (LFPPPPPPEFSEPFPPPIEESFPSPPPL), 162-180 (ASVPPPPPPLPSPPEPAPP), 187-209 (KPAPVLPKPPPPSAFPKPEPPQS), 222-240 (KPSPPSAVAPKPVAPPPVA), and 254-266 (AAPPTHTPAPPAP). Composition is skewed to basic and acidic residues over residues 328–341 (AKHEAPPPAAKHEA) and 358–387 (QRDKPRVLEKPRANVRDLVPEPPVETRGER). LIM zinc-binding domains are found at residues 481-542 (ELCG…TLEC), 543-600 (CAVC…RRYA), and 601-671 (PRCT…RARA).

It belongs to the zyxin/ajuba family. In terms of assembly, interacts (via LIM2 domain) with hesx1/anf1.

It localises to the cytoplasm. The protein resides in the cytoskeleton. The protein localises to the cell junction. Its subcellular location is the focal adhesion. Adhesion plaque protein. May be a component of a signal transduction pathway that mediates adhesion-stimulated changes in gene expression. Suppresses the transcription-repressing activity of hesx1/anf1. This is Zyxin from Xenopus tropicalis (Western clawed frog).